The chain runs to 505 residues: Zinc metalloproteinase/disintegrin (505 aa).

The N-terminal stretch at 1–20 (MIQVLLVIICLAAFPYQGTS) is a signal peptide. The propeptide occupies 21–214 (IILESGNVND…PIKKASQSNL (194 aa)). Repeat copies occupy residues 153–179 (KYED…YEPI) and 180–206 (KYED…YEPI). One can recognise a Peptidase M12B domain in the interval 220–416 (RYIELVIVAD…QKPQCILNKP (197 aa)). Residues E223 and D307 each coordinate Ca(2+). A Zn(2+)-binding site is contributed by H356. E357 is an active-site residue. 2 residues coordinate Zn(2+): H360 and H366. 2 disulfides stabilise this stretch: C371-C395 and C373-C378. Ca(2+)-binding residues include C411 and N414. Positions 417 to 432 (LRTDTVSTPVSGNELL) are excised as a propeptide. Positions 424–505 (TPVSGNELLE…AGCPRNPFHA (82 aa)) constitute a Disintegrin domain. Intrachain disulfides connect C438–C453, C440–C448, C447–C470, C461–C467, C466–C491, and C479–C498. Positions 483–485 (RGD) match the Cell attachment site motif.

It belongs to the venom metalloproteinase (M12B) family. P-II subfamily. P-IIa sub-subfamily. As to quaternary structure, monomer. It depends on Zn(2+) as a cofactor. In terms of tissue distribution, expressed by the venom gland.

It is found in the secreted. Its function is as follows. Impairs hemostasis in the envenomed animal. Functionally, inhibits platelet aggregation induced by ADP, thrombin, platelet-activating factor and collagen. Acts by inhibiting fibrinogen interaction with platelet receptors GPIIb/GPIIIa (ITGA2B/ITGB3). This chain is Zinc metalloproteinase/disintegrin, found in Gloydius brevicauda (Korean slamosa snake).